We begin with the raw amino-acid sequence, 109 residues long: UPF0060 membrane protein PCC8801_1733 (109 aa).

Transmembrane regions (helical) follow at residues Leu7 to Trp27, Tyr36 to Ala56, Phe58 to Trp78, and Ser87 to Pro107.

The protein belongs to the UPF0060 family.

Its subcellular location is the cell inner membrane. This chain is UPF0060 membrane protein PCC8801_1733, found in Rippkaea orientalis (strain PCC 8801 / RF-1) (Cyanothece sp. (strain PCC 8801)).